The primary structure comprises 363 residues: tRNA N6-adenosine threonylcarbamoyltransferase (363 aa).

Residues H127 and H131 each contribute to the Fe cation site. Residues 150–154, D183, G196, and N290 contribute to the substrate site; that span reads LISGG. D318 contributes to the Fe cation binding site.

It belongs to the KAE1 / TsaD family. Requires Fe(2+) as cofactor.

Its subcellular location is the cytoplasm. It catalyses the reaction L-threonylcarbamoyladenylate + adenosine(37) in tRNA = N(6)-L-threonylcarbamoyladenosine(37) in tRNA + AMP + H(+). In terms of biological role, required for the formation of a threonylcarbamoyl group on adenosine at position 37 (t(6)A37) in tRNAs that read codons beginning with adenine. Is involved in the transfer of the threonylcarbamoyl moiety of threonylcarbamoyl-AMP (TC-AMP) to the N6 group of A37, together with TsaE and TsaB. TsaD likely plays a direct catalytic role in this reaction. The protein is tRNA N6-adenosine threonylcarbamoyltransferase of Zymomonas mobilis subsp. mobilis (strain ATCC 31821 / ZM4 / CP4).